Consider the following 483-residue polypeptide: Protein nucleotidyltransferase YdiU (483 aa).

Positions 81, 83, 84, 103, 115, 116, 166, and 173 each coordinate ATP. Catalysis depends on D244, which acts as the Proton acceptor. Residues N245 and D254 each coordinate Mg(2+). D254 lines the ATP pocket.

This sequence belongs to the SELO family. Mg(2+) is required as a cofactor. It depends on Mn(2+) as a cofactor.

The enzyme catalyses L-seryl-[protein] + ATP = 3-O-(5'-adenylyl)-L-seryl-[protein] + diphosphate. It catalyses the reaction L-threonyl-[protein] + ATP = 3-O-(5'-adenylyl)-L-threonyl-[protein] + diphosphate. The catalysed reaction is L-tyrosyl-[protein] + ATP = O-(5'-adenylyl)-L-tyrosyl-[protein] + diphosphate. It carries out the reaction L-histidyl-[protein] + UTP = N(tele)-(5'-uridylyl)-L-histidyl-[protein] + diphosphate. The enzyme catalyses L-seryl-[protein] + UTP = O-(5'-uridylyl)-L-seryl-[protein] + diphosphate. It catalyses the reaction L-tyrosyl-[protein] + UTP = O-(5'-uridylyl)-L-tyrosyl-[protein] + diphosphate. Nucleotidyltransferase involved in the post-translational modification of proteins. It can catalyze the addition of adenosine monophosphate (AMP) or uridine monophosphate (UMP) to a protein, resulting in modifications known as AMPylation and UMPylation. The polypeptide is Protein nucleotidyltransferase YdiU (Shewanella pealeana (strain ATCC 700345 / ANG-SQ1)).